A 460-amino-acid chain; its full sequence is Nitrilase and fragile histidine triad fusion protein NitFhit (460 aa).

In terms of domain architecture, CN hydrolase spans 33 to 279; the sequence is ATIAVGQMRS…LDIGTAEVDL (247 aa). Active-site residues include Glu72, Lys142, and Cys183. One can recognise an HIT domain in the interval 315-422; it reads DRPFATNIVD…MPRRLGDFGH (108 aa). Positions 407 to 411 match the Histidine triad motif motif; that stretch reads HVHFH. The active-site Tele-AMP-histidine intermediate is His409.

It in the N-terminal section; belongs to the UPF0012 family. Homotetramer. It depends on Mn(2+) as a cofactor.

It catalyses the reaction P(1),P(3)-bis(5'-adenosyl) triphosphate + H2O = AMP + ADP + 2 H(+). Cleaves A-5'-PPP-5'A to yield AMP and ADP. The sequence is that of Nitrilase and fragile histidine triad fusion protein NitFhit from Drosophila melanogaster (Fruit fly).